The sequence spans 192 residues: DNA dC-&gt;dU-editing enzyme APOBEC-3Ca (192 aa).

In terms of domain architecture, CMP/dCMP-type deaminase spans 15–141; it reads IDPNTFRFHF…PNYQEGLCKL (127 aa). Histidine 69 is a binding site for Zn(2+). The active-site Proton donor is the glutamate 71. Residues cysteine 100 and cysteine 103 each coordinate Zn(2+).

The protein belongs to the cytidine and deoxycytidylate deaminase family. In terms of assembly, (Microbial infection) Interacts with feline foamy virus protein Bet. This interaction does not induce APOBEC3Ca degradation but prevents its dimerization and incorporation into the virion. The cofactor is Zn(2+).

The protein localises to the nucleus. The protein resides in the cytoplasm. The enzyme catalyses a 2'-deoxycytidine in single-stranded DNA + H2O + H(+) = a 2'-deoxyuridine in single-stranded DNA + NH4(+). In terms of biological role, DNA deaminase (cytidine deaminase) which acts as an inhibitor of retrovirus replication and retrotransposon mobility via deaminase-dependent and -independent mechanisms. Selectively targets single-stranded DNA and does not deaminate double-stranded DNA or single- or double-stranded RNA. Does not reduce infectivity of foamy feline virus, feline immunodeficiency virus or feline leukemia virus. The chain is DNA dC-&gt;dU-editing enzyme APOBEC-3Ca from Felis catus (Cat).